Here is a 337-residue protein sequence, read N- to C-terminus: Holliday junction branch migration complex subunit RuvB (337 aa).

The segment at 4–186 (ADRLIAADNP…FGIVQRLEYY (183 aa)) is large ATPase domain (RuvB-L). Residues isoleucine 25, arginine 26, glycine 67, lysine 70, threonine 71, threonine 72, 133–135 (EDY), arginine 176, tyrosine 186, and arginine 223 contribute to the ATP site. Threonine 71 serves as a coordination point for Mg(2+). Residues 187-257 (KVEDLQHIVQ…IADKALNMLD (71 aa)) form a small ATPAse domain (RuvB-S) region. The tract at residues 260–337 (VRGFDYMDRK…LHFGIDKPDK (78 aa)) is head domain (RuvB-H). Positions 296, 315, and 320 each coordinate DNA.

It belongs to the RuvB family. Homohexamer. Forms an RuvA(8)-RuvB(12)-Holliday junction (HJ) complex. HJ DNA is sandwiched between 2 RuvA tetramers; dsDNA enters through RuvA and exits via RuvB. An RuvB hexamer assembles on each DNA strand where it exits the tetramer. Each RuvB hexamer is contacted by two RuvA subunits (via domain III) on 2 adjacent RuvB subunits; this complex drives branch migration. In the full resolvosome a probable DNA-RuvA(4)-RuvB(12)-RuvC(2) complex forms which resolves the HJ.

The protein localises to the cytoplasm. It carries out the reaction ATP + H2O = ADP + phosphate + H(+). Functionally, the RuvA-RuvB-RuvC complex processes Holliday junction (HJ) DNA during genetic recombination and DNA repair, while the RuvA-RuvB complex plays an important role in the rescue of blocked DNA replication forks via replication fork reversal (RFR). RuvA specifically binds to HJ cruciform DNA, conferring on it an open structure. The RuvB hexamer acts as an ATP-dependent pump, pulling dsDNA into and through the RuvAB complex. RuvB forms 2 homohexamers on either side of HJ DNA bound by 1 or 2 RuvA tetramers; 4 subunits per hexamer contact DNA at a time. Coordinated motions by a converter formed by DNA-disengaged RuvB subunits stimulates ATP hydrolysis and nucleotide exchange. Immobilization of the converter enables RuvB to convert the ATP-contained energy into a lever motion, pulling 2 nucleotides of DNA out of the RuvA tetramer per ATP hydrolyzed, thus driving DNA branch migration. The RuvB motors rotate together with the DNA substrate, which together with the progressing nucleotide cycle form the mechanistic basis for DNA recombination by continuous HJ branch migration. Branch migration allows RuvC to scan DNA until it finds its consensus sequence, where it cleaves and resolves cruciform DNA. In Aliivibrio fischeri (strain ATCC 700601 / ES114) (Vibrio fischeri), this protein is Holliday junction branch migration complex subunit RuvB.